We begin with the raw amino-acid sequence, 525 residues long: MLECLSALLVLFAGGGGSVLAAVQSKTVADPNLCPGYNSQLISPFLSSCKRNLSECVSRYFDEQYAFCRSCVTVNNETMEDLDNCKCLQCALSSLNNSCFHDYCTSKDEYDKLQIVVEQFQLTNGVLDDGEILKPRGNKFSSRKLSYFVGQNNTLFRNPLQFEKNQLISALLTSLTNNQKTISSVDMFEVVDANNEVQYLRERTISGKTLSPATGYEEENDGDCSVKDKKWEGKIEYHENKKVSSENCSKDTDDKSGSKKERNTKAPLFHTATEIHMTRWSSWRPKKIFTRYLVNEYQSPKIITTVNRFYRTKTDTETGTTLITSTKAKRRWFPRTKIVTSTATSTFLSITTTTTTNAIATKSLVAVLNPDGLNKKAGINFGLFSANGELASPDEGGTPTVVRRDKISDPGAANEQATLFSTTFSQVPHLPELDSGEFISAASQLDKRIFIFTAITVSITTLMMLGFSYRSRVSFRDHSIDDSDDDNDWSDDEVEFDEEYFYSLPVSIPEKGISLDKMAQQLGVE.

The signal sequence occupies residues 1 to 21 (MLECLSALLVLFAGGGGSVLA). Residues 22-448 (AVQSKTVADP…ISAASQLDKR (427 aa)) lie on the Extracellular side of the membrane. Residues 242 to 264 (KVSSENCSKDTDDKSGSKKERNT) are disordered. The chain crosses the membrane as a helical span at residues 449-469 (IFIFTAITVSITTLMMLGFSY). Residues 470–525 (RSRVSFRDHSIDDSDDDNDWSDDEVEFDEEYFYSLPVSIPEKGISLDKMAQQLGVE) lie on the Cytoplasmic side of the membrane.

It localises to the membrane. This is an uncharacterized protein from Saccharomyces cerevisiae (strain ATCC 204508 / S288c) (Baker's yeast).